The sequence spans 103 residues: Small ribosomal subunit protein uS10 (103 aa).

The protein belongs to the universal ribosomal protein uS10 family. Part of the 30S ribosomal subunit.

Functionally, involved in the binding of tRNA to the ribosomes. This Chlorobaculum tepidum (strain ATCC 49652 / DSM 12025 / NBRC 103806 / TLS) (Chlorobium tepidum) protein is Small ribosomal subunit protein uS10.